The following is a 311-amino-acid chain: Chemotaxis protein CheV3 (311 aa).

In terms of domain architecture, CheW-like spans 13–164 (EIELVDFRIY…LESILDDLKL (152 aa)). Residues 182–308 (EVLFLDDSKT…FTEEISKILD (127 aa)) enclose the Response regulatory domain. Residue aspartate 241 is modified to 4-aspartylphosphate.

Plays a role in chemotaxis signal transduction system in order to colonize the host stomach. May act as a phosphate sink to control the flow of phosphate to CheAY. The sequence is that of Chemotaxis protein CheV3 from Helicobacter pylori (strain ATCC 700392 / 26695) (Campylobacter pylori).